The primary structure comprises 277 residues: Phosphoenolpyruvate synthase regulatory protein (277 aa).

Residue 157–164 (GVSRCGKT) participates in ADP binding.

It belongs to the pyruvate, phosphate/water dikinase regulatory protein family. PSRP subfamily.

It carries out the reaction [pyruvate, water dikinase] + ADP = [pyruvate, water dikinase]-phosphate + AMP + H(+). The catalysed reaction is [pyruvate, water dikinase]-phosphate + phosphate + H(+) = [pyruvate, water dikinase] + diphosphate. In terms of biological role, bifunctional serine/threonine kinase and phosphorylase involved in the regulation of the phosphoenolpyruvate synthase (PEPS) by catalyzing its phosphorylation/dephosphorylation. The protein is Phosphoenolpyruvate synthase regulatory protein of Escherichia coli O17:K52:H18 (strain UMN026 / ExPEC).